Reading from the N-terminus, the 339-residue chain is Ornithine carbamoyltransferase (339 aa).

Residues 56 to 59 (STRT), Arg-107, and 134 to 137 (HPTQ) each bind carbamoyl phosphate. L-ornithine is bound by residues Asn-168, Asp-232, and 236-237 (SM). Residues 274-275 (CL) and Arg-320 each bind carbamoyl phosphate.

This sequence belongs to the aspartate/ornithine carbamoyltransferase superfamily. OTCase family.

The protein localises to the cytoplasm. It catalyses the reaction carbamoyl phosphate + L-ornithine = L-citrulline + phosphate + H(+). The protein operates within amino-acid biosynthesis; L-arginine biosynthesis; L-arginine from L-ornithine and carbamoyl phosphate: step 1/3. Reversibly catalyzes the transfer of the carbamoyl group from carbamoyl phosphate (CP) to the N(epsilon) atom of ornithine (ORN) to produce L-citrulline. The polypeptide is Ornithine carbamoyltransferase (Buchnera aphidicola subsp. Baizongia pistaciae (strain Bp)).